Here is a 152-residue protein sequence, read N- to C-terminus: UPF0266 membrane protein YobD (152 aa).

Helical transmembrane passes span 6–26 (LVLILFIAALLAYALYDQFIM), 45–65 (VDSVIFVGLVAILIYNNVTSH), and 67–87 (AQMTTWLLSALALMGFYIFWI).

It belongs to the UPF0266 family.

Its subcellular location is the cell inner membrane. The chain is UPF0266 membrane protein YobD from Salmonella newport (strain SL254).